The chain runs to 655 residues: p-hydroxybenzoic acid efflux pump subunit AaeB (655 aa).

10 helical membrane-spanning segments follow: residues 13–33, 38–58, 69–89, 93–113, 121–141, 152–172, 370–390, 407–427, 431–451, and 481–501; these read FAVKLASAIVLTLFVGFHFQL, WAVLTAAIVAAGPAFAAGGEP, LRIIGTFIGCIAGLVIIIAMI, LLMILVCCIWAGFCTWISSLV, WGLAGYTALIIVITIQPEPLL, EIVVGIVCAIVADLIFSPRSI, LFWLWTGWTSGSGAMVMIAVV, FIYGTLAALPLGLLYFLVIIP, QSMLLLCLSLAVLGFFLGIEV, and LFLDSALGQIVGCVLAFTVIL.

The protein belongs to the aromatic acid exporter ArAE (TC 2.A.85) family.

Its subcellular location is the cell inner membrane. Forms an efflux pump with AaeA. Could function as a metabolic relief valve, allowing to eliminate certain compounds when they accumulate to high levels in the cell. The sequence is that of p-hydroxybenzoic acid efflux pump subunit AaeB from Escherichia fergusonii (strain ATCC 35469 / DSM 13698 / CCUG 18766 / IAM 14443 / JCM 21226 / LMG 7866 / NBRC 102419 / NCTC 12128 / CDC 0568-73).